A 523-amino-acid polypeptide reads, in one-letter code: Pentatricopeptide repeat-containing protein At3g21470 (523 aa).

PPR repeat units follow at residues 10 to 43 (GEFHVSNLIKNHISRGSPIQALVLYGGIRRRGVY), 44 to 79 (FPGWVPLILRACACVVPRVVLGKLLHSESIKFGVCS), 80 to 114 (DVMVGSSLISMYGKCGCVVSARKVFDEMPERNVAT), 115 to 141 (WNAMIGGYMSNGDAVLASGLFEEISVC), 143 to 173 (NTVTWIEMIKGYGKRIEIEKARELFERMPFE), 176 to 210 (NVKAWSVMLGVYVNNRKMEDARKFFEDIPEKNAFV), 211 to 237 (WSLMMSGYFRIGDVHEARAIFYRVFAR), 238 to 272 (DLVIWNTLIAGYAQNGYSDDAIDAFFNMQGEGYEP), 273 to 307 (DAVTVSSILSACAQSGRLDVGREVHSLINHRGIEL), 308 to 338 (NQFVSNALIDMYAKCGDLENATSVFESISVR), 339 to 373 (SVACCNSMISCLAIHGKGKEALEMFSTMESLDLKP), 374 to 408 (DEITFIAVLTACVHGGFLMEGLKIFSEMKTQDVKP), and 409 to 439 (NVKHFGCLIHLLGRSGKLKEAYRLVKEMHVK). Residues 444–523 (VLGALLGACK…SPGLSSLVLT (80 aa)) are type E motif.

This sequence belongs to the PPR family. PCMP-E subfamily.

In Arabidopsis thaliana (Mouse-ear cress), this protein is Pentatricopeptide repeat-containing protein At3g21470 (PCMP-E29).